A 787-amino-acid polypeptide reads, in one-letter code: Disease resistance protein ADR1 (787 aa).

Positions 1-149 constitute an RPW8 domain; it reads MASFIDLFAG…LLTERNDSLS (149 aa). Positions 96 to 112 form a coiled coil; the sequence is HANKMKDLEKQISRFLN. 193–200 contributes to the ATP binding site; the sequence is GMSGSGKT. Positions 247 to 414 constitute an NB-ARC domain; that stretch reads HQRKLVILDD…PLDLLTSVWV (168 aa). LRR repeat units lie at residues 549 to 575, 576 to 599, 650 to 674, and 722 to 745; these read MSRLRVLVIINNGMSPARLHGFSIFAN, LAKLRSLWLKRVHVPELTSCTIPL, ITSLNSLSITNCPRILELPKNLSNV, and LGSLEKIDMRECSLLGLPSSVAAL.

It belongs to the disease resistance NB-LRR family.

In terms of biological role, disease resistance (R) protein that mediates resistance against Hyaloperonospora parasitica in a salicylic acid-dependent manner. Also mediates resistance against Erysiphe cichoracearum is both salicylic acid-dependent and partially NPR1-dependent. Resistance proteins guard the plant against pathogens that contain an appropriate avirulence protein via an indirect interaction with this avirulence protein. That triggers a defense system including the hypersensitive response, which restricts the pathogen growth. This Arabidopsis thaliana (Mouse-ear cress) protein is Disease resistance protein ADR1 (ADR1).